Consider the following 245-residue polypeptide: 1-(5-phosphoribosyl)-5-[(5-phosphoribosylamino)methylideneamino] imidazole-4-carboxamide isomerase (245 aa).

The active-site Proton acceptor is D8. D129 (proton donor) is an active-site residue.

The protein belongs to the HisA/HisF family.

It localises to the cytoplasm. It catalyses the reaction 1-(5-phospho-beta-D-ribosyl)-5-[(5-phospho-beta-D-ribosylamino)methylideneamino]imidazole-4-carboxamide = 5-[(5-phospho-1-deoxy-D-ribulos-1-ylimino)methylamino]-1-(5-phospho-beta-D-ribosyl)imidazole-4-carboxamide. It functions in the pathway amino-acid biosynthesis; L-histidine biosynthesis; L-histidine from 5-phospho-alpha-D-ribose 1-diphosphate: step 4/9. The sequence is that of 1-(5-phosphoribosyl)-5-[(5-phosphoribosylamino)methylideneamino] imidazole-4-carboxamide isomerase from Rhodopseudomonas palustris (strain HaA2).